A 167-amino-acid polypeptide reads, in one-letter code: Leptin (167 aa).

The first 21 residues, 1-21 (MRCGPLCRFLWLWPYLSYIEA), serve as a signal peptide directing secretion. A disulfide bridge links Cys-117 with Cys-167.

The protein belongs to the leptin family.

The protein localises to the secreted. Key player in the regulation of energy balance and body weight control. Once released into the circulation, has central and peripheral effects by binding LEPR, found in many tissues, which results in the activation of several major signaling pathways. In the hypothalamus, acts as an appetite-regulating factor that induces a decrease in food intake and an increase in energy consumption by inducing anorexinogenic factors and suppressing orexigenic neuropeptides, also regulates bone mass and secretion of hypothalamo-pituitary-adrenal hormones. In the periphery, increases basal metabolism, influences reproductive function, regulates pancreatic beta-cell function and insulin secretion, is pro-angiogenic for endothelial cell and affects innate and adaptive immunity. In the arcuate nucleus of the hypothalamus, activates by depolarization POMC neurons inducing FOS and SOCS3 expression to release anorexigenic peptides and inhibits by hyperpolarization NPY neurons inducing SOCS3 with a consequent reduction on release of orexigenic peptides. In addition to its known satiety inducing effect, has a modulatory role in nutrient absorption. In the intestine, reduces glucose absorption by enterocytes by activating PKC and leading to a sequential activation of p38, PI3K and ERK signaling pathways which exerts an inhibitory effect on glucose absorption. Acts as a growth factor on certain tissues, through the activation of different signaling pathways increases expression of genes involved in cell cycle regulation such as CCND1, via JAK2-STAT3 pathway, or VEGFA, via MAPK1/3 and PI3K-AKT1 pathways. May also play an apoptotic role via JAK2-STAT3 pathway and up-regulation of BIRC5 expression. Pro-angiogenic, has mitogenic activity on vascular endothelial cells and plays a role in matrix remodeling by regulating the expression of matrix metalloproteinases (MMPs) and tissue inhibitors of metalloproteinases (TIMPs). In innate immunity, modulates the activity and function of neutrophils by increasing chemotaxis and the secretion of oxygen radicals. Increases phagocytosis by macrophages and enhances secretion of pro-inflammatory mediators. Increases cytotoxic ability of NK cells. Plays a pro-inflammatory role, in synergy with IL1B, by inducing NOS2 which promotes the production of IL6, IL8 and Prostaglandin E2, through a signaling pathway that involves JAK2, PI3K, MAP2K1/MEK1 and MAPK14/p38. In adaptive immunity, promotes the switch of memory T-cells towards T helper-1 cell immune responses. Increases CD4(+)CD25(-) T-cell proliferation and reduces autophagy during TCR (T-cell receptor) stimulation, through MTOR signaling pathway activation and BCL2 up-regulation. This is Leptin (LEP) from Ursus thibetanus (Asiatic black bear).